The chain runs to 227 residues: UPF0758 protein Rxyl_1530 (227 aa).

The 122-residue stretch at 106–227 (VISSPADVDG…YFSMKEHGML (122 aa)) folds into the MPN domain. Zn(2+) is bound by residues H177, H179, and D190. The short motif at 177 to 190 (HNHPSGRVEPSRED) is the JAMM motif element.

The protein belongs to the UPF0758 family.

The polypeptide is UPF0758 protein Rxyl_1530 (Rubrobacter xylanophilus (strain DSM 9941 / JCM 11954 / NBRC 16129 / PRD-1)).